Reading from the N-terminus, the 814-residue chain is DNA ligase (814 aa).

NAD(+) contacts are provided by residues 46-50 (DAEYD), 95-96 (SL), and E129. Residue K131 is the N6-AMP-lysine intermediate of the active site. NAD(+) is bound by residues R152, E189, K305, and K329. 4 residues coordinate Zn(2+): C434, C437, C458, and C464. The segment at 526–549 (SAQRRTEGEPAPKKPTKKKGEEED) is disordered. The BRCT domain occupies 735–814 (TSAAAFAGKT…DDWLAMLAEA (80 aa)).

The protein belongs to the NAD-dependent DNA ligase family. LigA subfamily. Requires Mg(2+) as cofactor. It depends on Mn(2+) as a cofactor.

The catalysed reaction is NAD(+) + (deoxyribonucleotide)n-3'-hydroxyl + 5'-phospho-(deoxyribonucleotide)m = (deoxyribonucleotide)n+m + AMP + beta-nicotinamide D-nucleotide.. Functionally, DNA ligase that catalyzes the formation of phosphodiester linkages between 5'-phosphoryl and 3'-hydroxyl groups in double-stranded DNA using NAD as a coenzyme and as the energy source for the reaction. It is essential for DNA replication and repair of damaged DNA. The sequence is that of DNA ligase from Methylorubrum extorquens (strain CM4 / NCIMB 13688) (Methylobacterium extorquens).